A 908-amino-acid chain; its full sequence is DNA polymerase I (908 aa).

Residues 1-318 (MKELYLIDAL…DDINTIDTEN (318 aa)) enclose the 5'-3' exonuclease domain. In terms of domain architecture, 3'-5' exonuclease spans 319–531 (VKYRSITTKI…MEENGIYLDK (213 aa)). Positions 532–908 (EYLKEYGKEL…ETGKSWGEIH (377 aa)) are polymerase.

Belongs to the DNA polymerase type-A family.

It carries out the reaction DNA(n) + a 2'-deoxyribonucleoside 5'-triphosphate = DNA(n+1) + diphosphate. Its function is as follows. In addition to polymerase activity, this DNA polymerase exhibits 3'-5' and 5'-3' exonuclease activity. This Borreliella burgdorferi (strain ATCC 35210 / DSM 4680 / CIP 102532 / B31) (Borrelia burgdorferi) protein is DNA polymerase I (polA).